We begin with the raw amino-acid sequence, 607 residues long: Granule-bound starch synthase 1, chloroplastic/amyloplastic (607 aa).

A chloroplast-targeting transit peptide spans methionine 1 to cysteine 77. ADP-alpha-D-glucose is bound at residue lysine 95. A disordered region spans residues serine 585–proline 607.

The protein belongs to the glycosyltransferase 1 family. Bacterial/plant glycogen synthase subfamily.

It localises to the plastid. It is found in the chloroplast. Its subcellular location is the amyloplast. The enzyme catalyses an NDP-alpha-D-glucose + [(1-&gt;4)-alpha-D-glucosyl](n) = [(1-&gt;4)-alpha-D-glucosyl](n+1) + a ribonucleoside 5'-diphosphate + H(+). It participates in glycan biosynthesis; starch biosynthesis. The protein is Granule-bound starch synthase 1, chloroplastic/amyloplastic (WAXY) of Solanum tuberosum (Potato).